The sequence spans 296 residues: MPELPEVEVVRRGLDAHVTGKAITAVRVHHPRAVRRHEAGPADLTARLLGMRITGTGRRGKYLWLTLDDGDEPLARRAESSVALVVHLGMSGQMLLGPIPKEDHLRIAALFDDGTALSFVDQRTFGGWLLADLVTVDGTDVPVPVAHVARDPLDPRFDRDAVVKVLRGKHSEIKRQLLDQTVVSGIGNIYADEALWRAKVNGARLAESLTKPKLAEILDHAADVMRDALGQGGTSFDSLYVNVNGESGYFDRSLDAYGREGEPCRRCGAIMRRDKFMNRSSFYCPRCQPRPRVRRA.

Pro2 functions as the Schiff-base intermediate with DNA in the catalytic mechanism. Glu3 functions as the Proton donor in the catalytic mechanism. Lys61 serves as the catalytic Proton donor; for beta-elimination activity. DNA contacts are provided by His104, Arg123, and Lys169. The FPG-type zinc finger occupies 255-289 (DAYGREGEPCRRCGAIMRRDKFMNRSSFYCPRCQP). The active-site Proton donor; for delta-elimination activity is Arg279.

Belongs to the FPG family. In terms of assembly, monomer. Zn(2+) serves as cofactor.

It catalyses the reaction Hydrolysis of DNA containing ring-opened 7-methylguanine residues, releasing 2,6-diamino-4-hydroxy-5-(N-methyl)formamidopyrimidine.. It carries out the reaction 2'-deoxyribonucleotide-(2'-deoxyribose 5'-phosphate)-2'-deoxyribonucleotide-DNA = a 3'-end 2'-deoxyribonucleotide-(2,3-dehydro-2,3-deoxyribose 5'-phosphate)-DNA + a 5'-end 5'-phospho-2'-deoxyribonucleoside-DNA + H(+). Its function is as follows. Involved in base excision repair of DNA damaged by oxidation or by mutagenic agents. Acts as a DNA glycosylase that recognizes and removes damaged bases. Has a preference for oxidized purines, such as 7,8-dihydro-8-oxoguanine (8-oxoG). Has AP (apurinic/apyrimidinic) lyase activity and introduces nicks in the DNA strand. Cleaves the DNA backbone by beta-delta elimination to generate a single-strand break at the site of the removed base with both 3'- and 5'-phosphates. The protein is Formamidopyrimidine-DNA glycosylase of Mycobacterium sp. (strain KMS).